We begin with the raw amino-acid sequence, 493 residues long: Ketol-acid reductoisomerase (NADP(+)) (493 aa).

The KARI N-terminal Rossmann domain occupies 14 to 208 (LDQLGRCRFM…GGHRAGVLES (195 aa)). Residues 45-48 (CGAQ), R68, R76, S78, and 108-110 (DKQ) each bind NADP(+). H132 is an active-site residue. G158 lines the NADP(+) pocket. KARI C-terminal knotted domains are found at residues 209 to 345 (SFVA…APKG) and 346 to 486 (ENIK…MTDM). Mg(2+) is bound by residues D217, E221, E390, and E394. S415 lines the substrate pocket.

This sequence belongs to the ketol-acid reductoisomerase family. The cofactor is Mg(2+).

It catalyses the reaction (2R)-2,3-dihydroxy-3-methylbutanoate + NADP(+) = (2S)-2-acetolactate + NADPH + H(+). The catalysed reaction is (2R,3R)-2,3-dihydroxy-3-methylpentanoate + NADP(+) = (S)-2-ethyl-2-hydroxy-3-oxobutanoate + NADPH + H(+). The protein operates within amino-acid biosynthesis; L-isoleucine biosynthesis; L-isoleucine from 2-oxobutanoate: step 2/4. It functions in the pathway amino-acid biosynthesis; L-valine biosynthesis; L-valine from pyruvate: step 2/4. Involved in the biosynthesis of branched-chain amino acids (BCAA). Catalyzes an alkyl-migration followed by a ketol-acid reduction of (S)-2-acetolactate (S2AL) to yield (R)-2,3-dihydroxy-isovalerate. In the isomerase reaction, S2AL is rearranged via a Mg-dependent methyl migration to produce 3-hydroxy-3-methyl-2-ketobutyrate (HMKB). In the reductase reaction, this 2-ketoacid undergoes a metal-dependent reduction by NADPH to yield (R)-2,3-dihydroxy-isovalerate. In Histophilus somni (strain 129Pt) (Haemophilus somnus), this protein is Ketol-acid reductoisomerase (NADP(+)).